The chain runs to 3019 residues: Genome polyprotein (3019 aa).

Ser-2 bears the N-acetylserine; by host mark. Positions 2-23 (STLPKPQRKTKRNTNRRPMDVK) are interaction with STAT1. Positions 2-58 (STLPKPQRKTKRNTNRRPMDVKFPGGGQIVGGVYLLPRRGPRLGVRATRKTSERSQP) are interaction with EIF2AK2/PKR. An interaction with DDX3X region spans residues 2–59 (STLPKPQRKTKRNTNRRPMDVKFPGGGQIVGGVYLLPRRGPRLGVRATRKTSERSQPR). The disordered stretch occupies residues 2–75 (STLPKPQRKT…PKARQPQGRH (74 aa)). The Cytoplasmic segment spans residues 2-168 (STLPKPQRKT…EDGINYATGN (167 aa)). Short sequence motifs (nuclear localization signal) lie at residues 5-13 (PKPQRKTKR) and 38-43 (PRRGPR). A compositionally biased stretch (basic residues) spans 7 to 16 (PQRKTKRNTN). Low complexity predominate over residues 32–47 (GGVYLLPRRGPRLGVR). Position 53 is a phosphoserine; by host (Ser-53). 2 consecutive short sequence motifs (nuclear localization signal) follow at residues 58 to 64 (PRGRRQP) and 66 to 71 (PKARQP). At Ser-99 the chain carries Phosphoserine; by host. Residues 112-152 (PRRRSRNLGKVIDTLTCGFADLMGYIPVVGAPLGGVAAALA) form an important for endoplasmic reticulum and mitochondrial localization region. Ser-116 is modified (phosphoserine; by host PKA). An interaction with APOA2 region spans residues 122-173 (VIDTLTCGFADLMGYIPVVGAPLGGVAAALAHGVRAIEDGINYATGNLPGCS). The segment at 164-167 (YATG) is important for lipid droplets localization. Residues 169–189 (LPGCSFSIFLLALLSCLTTPA) traverse the membrane as a helical segment. The propeptide at 178–191 (LLALLSCLTTPASA) is ER anchor for the core protein, removed in mature form by host signal peptidase. The Lumenal portion of the chain corresponds to 190-358 (SALTYGNSSG…FGGHWGILLA (169 aa)). N-linked (GlcNAc...) asparagine; by host glycans are attached at residues Asn-196, Asn-209, Asn-234, and Asn-250. The segment at 265–296 (LAGAAVVCSSLYIGDLCGSLFLAGQLFTFQPR) is important for fusion. N-linked (GlcNAc...) asparagine; by host glycosylation occurs at Asn-305. The helical transmembrane segment at 359-379 (VAYFGMAGNWLKVLAVLFLFA) threads the bilayer. The Lumenal segment spans residues 380 to 730 (GVEATTTVGH…WEYIVLMFLV (351 aa)). Residues 385–411 (TTVGHGVARTTAGITGLFSPGASQNLQ) form an HVR1 region. A glycan (N-linked (GlcNAc...) asparagine; by host) is linked at Asn-415. Residues Asn-422 and Asn-429 are each glycosylated (N-linked (GlcNAc...) (high mannose) asparagine; by host). 4 cysteine pairs are disulfide-bonded: Cys-428–Cys-553, Cys-451–Cys-458, Cys-487–Cys-495, and Cys-504–Cys-509. N-linked (GlcNAc...) asparagine; by host glycosylation occurs at Asn-447. The segment at 474 to 479 (KVNISG) is HVR2. Asn-476 carries N-linked (GlcNAc...) asparagine; by host glycosylation. The CD81-binding 1 stretch occupies residues 481 to 494 (SDDRPYCWHYAPRP). Asn-533 carries N-linked (GlcNAc...) asparagine; by host glycosylation. Residues 545–552 (PPTGGWFG) are CD81-binding 2. A glycan (N-linked (GlcNAc...) asparagine; by host) is linked at Asn-557. Residues Cys-565 and Cys-570 are joined by a disulfide bond. Asn-578 carries an N-linked (GlcNAc...) asparagine; by host glycan. 3 disulfides stabilise this stretch: Cys-586–Cys-590, Cys-602–Cys-625, and Cys-612–Cys-649. N-linked (GlcNAc...) (high mannose) asparagine; by host glycosylation is found at Asn-628 and Asn-650. The cysteines at positions 657 and 682 are disulfide-linked. The tract at residues 665-676 (IEMSPLLFSTTQ) is PKR/eIF2-alpha phosphorylation homology domain (PePHD). The helical transmembrane segment at 731-751 (LADARICTCLWLMLLISNVEA) threads the bilayer. Over 752–762 (AVERLVVLNAA) the chain is Lumenal. The chain crosses the membrane as a helical span at residues 763–783 (SAAGTAGWWWAVLFLCCVWYV). The Cytoplasmic portion of the chain corresponds to 784-786 (KGR). A helical transmembrane segment spans residues 787–808 (LVPACTYMALGMWPLLLTILAL). At 809–818 (PHRAYAMDNE) the chain is on the lumenal side. A helical membrane pass occupies residues 819–839 (QAASLGAVGLLAITIFTITPT). The Cytoplasmic segment spans residues 840–843 (YKKL). A helical transmembrane segment spans residues 844 to 863 (LTCFIWWNQYFLARAEAMVH). Topologically, residues 864-886 (EWVPDLRVRGGRDSIILLTCLLH) are lumenal. The chain crosses the membrane as a helical span at residues 887–907 (PQLGFEVTKILLAILAPLYIL). The Peptidase C18 domain maps to 908–1031 (QYSLLKVPYF…DMQRGGWKLL (124 aa)). At 908–1662 (QYSLLKVPYF…CMSADLEVIT (755 aa)) the chain is on the cytoplasmic side. The tract at residues 909–1211 (YSLLKVPYFV…PVENMETTMR (303 aa)) is protease NS2-3. The S-palmitoyl cysteine; by host moiety is linked to residue Cys-927. Positions 934-954 (AGGRYVQACLLRLGAWTGTFI) are interaction with host SCPS1. Catalysis depends on for protease NS2 activity; shared with dimeric partner residues His-957, Glu-977, and Cys-998. One can recognise a Peptidase S29 domain in the interval 1032–1213 (APITAYAQQT…ENMETTMRSP (182 aa)). Residues His-1088 and Asp-1112 each act as charge relay system; for serine protease NS3 activity in the active site. Positions 1128 and 1130 each coordinate Zn(2+). Ser-1170 functions as the Charge relay system; for serine protease NS3 activity in the catalytic mechanism. Zn(2+) is bound by residues Cys-1176 and His-1180. The region spanning 1222–1374 (PAVPQTYQVG…PNITETALPT (153 aa)) is the Helicase ATP-binding domain. Position 1235–1242 (1235–1242 (APTGSGKS)) interacts with ATP. Positions 1242 and 1322 each coordinate Mg(2+). The short motif at 1321 to 1324 (DECH) is the DECH box element. The tract at residues 1491-1503 (QRRGRTGRGKPGV) is RNA-binding. A helical membrane pass occupies residues 1663–1683 (STWVLVGGVLAALAAYCLSVG). Positions 1684–1695 (CVVICGRITLTG) are NS3-binding. The Cytoplasmic portion of the chain corresponds to 1684–1810 (CVVICGRITL…SLTSPLRTSQ (127 aa)). The helical transmembrane segment at 1811-1829 (TLLLNILGGWIAAQVAPPP) threads the bilayer. The Lumenal portion of the chain corresponds to 1830 to 1833 (ASTA). The helical transmembrane segment at 1834 to 1854 (FVVSGLAGAAVGSIRLGRVLV) threads the bilayer. Position 1855 (Asp-1855) is a topological domain, cytoplasmic. A helical transmembrane segment spans residues 1856–1876 (VLAGYGAGVSGALVAFKIMSG). The Lumenal portion of the chain corresponds to 1877 to 1886 (DCPTTEDMVN). The helical transmembrane segment at 1887–1907 (LLPALLSPGALVVGVVCAAIL) threads the bilayer. Residues 1908–1977 (RRHVGPAEGA…WVNEDTATPC (70 aa)) are Cytoplasmic-facing. A lipid anchor (S-palmitoyl cysteine; by host) is attached at Cys-1977. Residues 1978 to 2007 (ATSWLRDVWDWVCTVLSDFKVWLQAKLFPR) lie within the membrane without spanning it. Residues 2008 to 2998 (LPGIPFLSCQ…YHSVSQARPR (991 aa)) are Cytoplasmic-facing. Zn(2+) is bound by residues Cys-2016, Cys-2034, Cys-2036, and Cys-2057. Residues 2125–2213 (EFFTEVDGVR…ASSSASQLSA (89 aa)) are FKBP8-binding. Residues 2125-2338 (EFFTEVDGVR…PIPPPRRKRL (214 aa)) form a transcriptional activation region. The interval 2140–2144 (PPCKP) is interaction with non-structural protein 4A. The segment at 2189-2223 (ETASRRLKRGSPPSLASSSASQLSAPSLKATCTTS) is disordered. The segment at 2194-2446 (RLKRGSPPSL…ALITPCAAEE (253 aa)) is interaction with host SKP2. At Ser-2199 the chain carries Phosphoserine; by host; in p56. Residues 2199–2216 (SPPSLASSSASQLSAPSL) are compositionally biased toward low complexity. 5 positions are modified to phosphoserine; by host; in p58: Ser-2202, Ser-2206, Ser-2209, Ser-2212, and Ser-2215. Positions 2215–2254 (SLKATCTTSKDHPDMELIEANLLWRQEMGGNITRVESENK) are ISDR. The interval 2215–2280 (SLKATCTTSK…REISVSAECH (66 aa)) is interaction with EIF2AK2/PKR. The interval 2254–2312 (KVVVLDSFEPLTAEYDEREISVSAECHRPPRHKFPPALPIWARPDYNPPLLQAWQMPGY) is NS4B-binding. A V3 region spans residues 2305-2383 (QAWQMPGYEP…SITSPDPPAP (79 aa)). Residues 2328-2331 (APIP) carry the SH3-binding motif. The short motif at 2333–2341 (PRRKRLVHL) is the Nuclear localization signal element. A Glycyl lysine isopeptide (Lys-Gly) (interchain with G-Cter in ubiquitin) cross-link involves residue Lys-2356. The interval 2359–2418 (VEGSSDPGPSSDSGLSITSPDPPAPTTPDDACSEAESYSSMPPLEGEPGDPDLSSGSWST) is disordered. Residues 2361 to 2372 (GSSDPGPSSDSG) show a composition bias toward low complexity. Phosphoserine; by host is present on residues Ser-2457 and Ser-2470. The 119-residue stretch at 2642 to 2760 (PMGFSYDTRC…ICESAGVQED (119 aa)) folds into the RdRp catalytic domain. Mg(2+) is bound by residues Asp-2648, Asp-2746, and Asp-2747. The helical transmembrane segment at 2999 to 3019 (LLLLGLLLLTVGVGIFLVPAR) threads the bilayer.

This sequence belongs to the hepacivirus polyprotein family. As to quaternary structure, homooligomer. Interacts with E1 (via C-terminus). Interacts with the non-structural protein 5A. Interacts (via N-terminus) with host STAT1 (via SH2 domain); this interaction results in decreased STAT1 phosphorylation and ubiquitin-mediated proteasome-dependent STAT1 degradation, leading to decreased IFN-stimulated gene transcription. Interacts with host STAT3; this interaction constitutively activates STAT3. Interacts with host LTBR receptor. Interacts with host TNFRSF1A receptor and possibly induces apoptosis. Interacts with host HNRPK. Interacts with host YWHAE. Interacts with host UBE3A/E6AP. Interacts with host DDX3X. Interacts with host APOA2. Interacts with host RXRA protein. Interacts with host SP110 isoform 3/Sp110b; this interaction sequesters the transcriptional corepressor SP110 away from the nucleus. Interacts with host CREB3 nuclear transcription protein; this interaction triggers cell transformation. Interacts with host ACY3. Interacts with host C1QR1. Interacts with host RBM24; this interaction, which enhances the interaction of the mature core protein with 5'-UTR, may inhibit viral translation and favor replication. Interacts with host EIF2AK2/PKR; this interaction induces the autophosphorylation of EIF2AK2. Part of the viral assembly initiation complex composed of NS2, E1, E2, NS3, NS4A, NS5A and the mature core protein. In terms of assembly, forms a heterodimer with envelope glycoprotein E2. Interacts with mature core protein. Interacts with protease NS2. The heterodimer E1/E2 interacts with host CLDN1; this interaction plays a role in viral entry into host cell. Interacts with host SPSB2 (via C-terminus). Part of the viral assembly initiation complex composed of NS2, E1, E2, NS3, NS4A, NS5A and the mature core protein. Interacts with host NEURL3; this interaction prevents E1 binding to glycoprotein E2. Forms a heterodimer with envelope glycoprotein E1. Interacts with host CD81 and SCARB1 receptors; these interactions play a role in viral entry into host cell. Interacts with host EIF2AK2/PKR; this interaction inhibits EIF2AK2 and probably allows the virus to evade the innate immune response. Interacts with host CD209/DC-SIGN and CLEC4M/DC-SIGNR. Interact with host SPCS1; this interaction is essential for viral particle assembly. Interacts with protease NS2. The heterodimer E1/E2 interacts with host CLDN1; this interaction plays a role in viral entry into host cell. Part of the viral assembly initiation complex composed of NS2, E1, E2, NS3, NS4A, NS5A and the mature core protein. Interacts with host SLC3A2/4F2hc; the interaction may facilitate viral entry into host cell. Interacts with human PLSCR1. As to quaternary structure, homohexamer. Homoheptamer. Interacts with protease NS2. In terms of assembly, homodimer. Interacts with host SPCS1; this interaction is essential for viral particle assembly. Interacts with envelope glycoprotein E1. Interacts with envelope glycoprotein E2. Interacts with viroporin p7. Interacts with serine protease/helicase NS3. Part of the replication complex composed of NS2, NS3, NS4A, NS4B, NS5A and the RNA-directed RNA polymerase embedded in an ER-derived membranous web. Part of the viral assembly initiation complex composed of NS2, E1, E2, NS3, NS4A, NS5A and the mature core protein. Interacts with protease NS2. Interacts with non-structural protein 4A; this interaction stabilizes the folding of NS3 serine protease. NS3-NS4A interaction is essential for NS3 activation and allows membrane anchorage of the latter. NS3/NS4A complex also prevents phosphorylation of host IRF3, thus preventing the establishment of dsRNA induced antiviral state. Interacts with host MAVS; this interaction leads to the cleavage and inhibition of host MAVS. Interacts with host TICAM1; this interaction leads to the cleavage and inhibition of host TICAM1. Interacts with host TANK-binding kinase/TBK1; this interaction results in the inhibition of the association between TBK1 and IRF3, which leads to the inhibition of IRF3 activation. Interacts with host RBM24. Part of the replication complex composed of NS2, NS3, NS4A, NS4B, NS5A and the RNA-directed RNA polymerase embedded in an ER-derived membranous web. Part of the viral assembly initiation complex composed of NS2, E1, E2, NS3, NS4A, NS5A and the mature core protein. As to quaternary structure, interacts with NS3 serine protease; this interaction stabilizes the folding of NS3 serine protease. NS3-NS4A interaction is essential for NS3 activation and allows membrane anchorage of the latter. Interacts with non-structural protein 5A (via N-terminus). Part of the replication complex composed of NS2, NS3, NS4A, NS4B, NS5A and the RNA-directed RNA polymerase embedded in an ER-derived membranous web. Part of the viral assembly initiation complex composed of NS2, E1, E2, NS3, NS4A, NS5A and the mature core protein. In terms of assembly, homomultimer. Interacts with non-structural protein NS5A. Interacts with host PLA2G4C; this interaction likely initiates the recruitment of replication complexes to lipid droplets. Interacts with host STING; this interaction disrupts the interaction between STING and TBK1 thereby suppressing the interferon signaling. Part of the replication complex composed of NS2, NS3, NS4A, NS4B, NS5A and the RNA-directed RNA polymerase embedded in an ER-derived membranous web. Monomer. Homodimer; dimerization is required for RNA-binding. Interacts with the mature core protein. Interacts (via N-terminus) with non-structural protein 4A. Interacts with non-structural protein 4B. Interacts (via region D2) with RNA-directed RNA polymerase. Part of the viral assembly initiation complex composed of NS2, E1, E2, NS3, NS4A, NS5A and the mature core protein. Part of the replication complex composed of NS2, NS3, NS4A, NS4B, NS5A and the RNA-directed RNA polymerase embedded in an ER-derived membranous web. Interacts with host GRB2. Interacts with host BIN1. Interacts with host PIK3R1. Interacts with host SRCAP. Interacts with host FKBP8. Interacts (via C-terminus) with host VAPB (via MSP domain). Interacts with host EIF2AK2/PKR; this interaction leads to disruption of EIF2AK2 dimerization by NS5A and probably allows the virus to evade the innate immune response. Interacts (via N-terminus) with host PACSIN2 (via N-terminus); this interaction attenuates protein kinase C alpha-mediated phosphorylation of PACSIN2 by disrupting the interaction between PACSIN2 and PRKCA. Interacts (via N-terminus) with host SRC kinase (via SH2 domain). Interacts with most Src-family kinases. Interacts with host IFI27 and SKP2; promotes the ubiquitin-mediated proteasomal degradation of NS5A. Interacts with host GPS2. Interacts with host TNFRSF21; this interaction allows the modulation by the virus of JNK, p38 MAPK, STAT3, and Akt signaling pathways in a DR6-dependent manner. Interacts (via N-terminus) with host CIDEB (via N-terminus); this interaction seems to regulate the association of HCV particles with APOE. Interacts with host CHKA/Choline Kinase-alpha; CHKA bridges host PI4KA and NS5A and potentiates NS5A-stimulated PI4KA activity, which then facilitates the targeting of the ternary complex to the ER for viral replication. Interacts with host SPSB2 (via C-terminus); this interaction targets NS5A for ubiquitination and degradation. Interacts with host RAB18; this interaction may promote the association of NS5A and other replicase components with lipid droplets. Interacts (via region D2) with host PPIA/CYPA; the interaction stimulates RNA-binding ability of NS5A and is dependent on the peptidyl-prolyl cis-trans isomerase activity of PPIA/CYPA. Interacts with host TRIM14; this interaction induces the degradation of NS5A. As to quaternary structure, homooligomer. Interacts with non-structural protein 5A. Interacts with host VAPB. Interacts with host PRK2/PKN2. Interacts with host HNRNPA1 and SEPT6; these interactions facilitate viral replication. Part of the replication complex composed of NS2, NS3, NS4A, NS4B, NS5A and the RNA-directed RNA polymerase. Zn(2+) is required as a cofactor. The cofactor is Mg(2+). In terms of processing, specific enzymatic cleavages in vivo yield mature proteins. The structural proteins, core, E1, E2 and p7 are produced by proteolytic processing by host signal peptidases. The core protein precursor is synthesized as a 23 kDa, which is retained in the ER membrane through the hydrophobic signal peptide. Cleavage by the signal peptidase releases the 21 kDa mature core protein. The cleavage of the core protein precursor occurs between aminoacids 176 and 188 but the exact cleavage site is not known. Some degraded forms of the core protein appear as well during the course of infection. The other proteins (p7, NS2, NS3, NS4A, NS4B, NS5A and NS5B) are cleaved by the viral proteases. Autoprocessing between NS2 and NS3 is mediated by the NS2 cysteine protease catalytic domain and regulated by the NS3 N-terminal domain. Phosphorylated by host PKC and PKA. Post-translationally, ubiquitinated; mediated by UBE3A and leading to core protein subsequent proteasomal degradation. In terms of processing, highly N-glycosylated. Palmitoylation is required for NS2/3 autoprocessing and E2 recruitment to membranes. Post-translationally, palmitoylated. This modification may play a role in its polymerization or in protein-protein interactions. In terms of processing, phosphorylated on serines in a basal form termed p56. p58 is a hyperphosphorylated form of p56. p56 and p58 coexist in the cell in roughly equivalent amounts. Hyperphosphorylation is dependent on the presence of NS4A. Host CSNK1A1/CKI-alpha or RPS6KB1 kinases may be responsible for NS5A phosphorylation. Tyrosine phosphorylation is essential for the interaction with host SRC. Post-translationally, the N-terminus is phosphorylated by host PRK2/PKN2.

It localises to the host endoplasmic reticulum membrane. Its subcellular location is the host mitochondrion membrane. The protein localises to the virion. It is found in the host cytoplasm. The protein resides in the host nucleus. It localises to the host lipid droplet. Its subcellular location is the virion membrane. The protein localises to the host mitochondrion. It is found in the host cell membrane. The protein resides in the host perinuclear region. It catalyses the reaction Hydrolysis of four peptide bonds in the viral precursor polyprotein, commonly with Asp or Glu in the P6 position, Cys or Thr in P1 and Ser or Ala in P1'.. The catalysed reaction is a ribonucleoside 5'-triphosphate + H2O = a ribonucleoside 5'-diphosphate + phosphate + H(+). The enzyme catalyses ATP + H2O = ADP + phosphate + H(+). It carries out the reaction RNA(n) + a ribonucleoside 5'-triphosphate = RNA(n+1) + diphosphate. Its activity is regulated as follows. Inhibited by the antiviral drug hexamethylene amiloride. Inhibition by amantadine appears to be genotype-dependent. Also inhibited by long-alkyl-chain iminosugar derivatives. With respect to regulation, activity is up-regulated by PRK2/PKN2-mediated phosphorylation. Its function is as follows. Packages viral RNA to form a viral nucleocapsid, and promotes virion budding. Participates in the viral particle production as a result of its interaction with the non-structural protein 5A. Binds RNA and may function as a RNA chaperone to induce the RNA structural rearrangements taking place during virus replication. Modulates viral translation initiation by interacting with viral IRES and 40S ribosomal subunit. Affects various cell signaling pathways, host immunity and lipid metabolism. Prevents the establishment of cellular antiviral state by blocking the interferon-alpha/beta (IFN-alpha/beta) and IFN-gamma signaling pathways and by blocking the formation of phosphorylated STAT1 and promoting ubiquitin-mediated proteasome-dependent degradation of STAT1. Activates STAT3 leading to cellular transformation. Regulates the activity of cellular genes, including c-myc and c-fos. May repress the promoter of p53, and sequester CREB3 and SP110 isoform 3/Sp110b in the cytoplasm. Represses cell cycle negative regulating factor CDKN1A, thereby interrupting an important check point of normal cell cycle regulation. Targets transcription factors involved in the regulation of inflammatory responses and in the immune response: suppresses TNF-induced NF-kappa-B activation, and activates AP-1. Binds to dendritic cells (DCs) via C1QR1, resulting in down-regulation of T-lymphocytes proliferation. Alters lipid metabolism by interacting with hepatocellular proteins involved in lipid accumulation and storage. Induces up-regulation of FAS promoter activity, and thereby contributes to the increased triglyceride accumulation in hepatocytes (steatosis). Forms a heterodimer with envelope glycoprotein E2, which mediates virus attachment to the host cell, virion internalization through clathrin-dependent endocytosis and fusion with host membrane. Fusion with the host cell is most likely mediated by both E1 and E2, through conformational rearrangements of the heterodimer required for fusion rather than a classical class II fusion mechanism. E1/E2 heterodimer binds host apolipoproteins such as APOB and ApoE thereby forming a lipo-viro-particle (LVP). APOE associated to the LVP allows the initial virus attachment to cell surface receptors such as the heparan sulfate proteoglycans (HSPGs), syndecan-1 (SDC1), syndecan-1 (SDC2), the low-density lipoprotein receptor (LDLR) and scavenger receptor class B type I (SCARB1). The cholesterol transfer activity of SCARB1 allows E2 exposure and binding of E2 to SCARB1 and the tetraspanin CD81. E1/E2 heterodimer binding on CD81 activates the epithelial growth factor receptor (EGFR) signaling pathway. Diffusion of the complex E1-E2-EGFR-SCARB1-CD81 to the cell lateral membrane allows further interaction with Claudin 1 (CLDN1) and occludin (OCLN) to finally trigger HCV entry. Functionally, forms a heterodimer with envelope glycoprotein E1, which mediates virus attachment to the host cell, virion internalization through clathrin-dependent endocytosis and fusion with host membrane. Fusion with the host cell is most likely mediated by both E1 and E2, through conformational rearrangements of the heterodimer required for fusion rather than a classical class II fusion mechanism. The interaction between envelope glycoprotein E2 and host apolipoprotein E/APOE allows the proper assembly, maturation and infectivity of the viral particles. This interaction is probably promoted via the up-regulation of cellular autophagy by the virus. E1/E2 heterodimer binds host apolipoproteins such as APOB and APOE thereby forming a lipo-viro-particle (LVP). APOE associated to the LVP allows the initial virus attachment to cell surface receptors such as the heparan sulfate proteoglycans (HSPGs), syndecan-1 (SDC1), syndecan-1 (SDC2), the low-density lipoprotein receptor (LDLR) and scavenger receptor class B type I (SCARB1). The cholesterol transfer activity of SCARB1 allows E2 exposure and binding of E2 to SCARB1 and the tetraspanin CD81. E1/E2 heterodimer binding on CD81 activates the epithelial growth factor receptor (EGFR) signaling pathway. Diffusion of the complex E1-E2-EGFR-SCARB1-CD81 to the cell lateral membrane allows further interaction with Claudin 1 (CLDN1) and occludin (OCLN) to finally trigger HCV entry. Inhibits host EIF2AK2/PKR activation, preventing the establishment of an antiviral state. Viral ligand for CD209/DC-SIGN and CLEC4M/DC-SIGNR, which are respectively found on dendritic cells (DCs), and on liver sinusoidal endothelial cells and macrophage-like cells of lymph node sinuses. These interactions allow the capture of circulating HCV particles by these cells and subsequent facilitated transmission to permissive cells such as hepatocytes and lymphocyte subpopulations. The interaction between E2 and host amino acid transporter complex formed by SLC3A2 and SLC7A5/LAT1 may facilitate viral entry into host cell. In terms of biological role, ion channel protein that acts as a viroporin and plays an essential role in the assembly, envelopment and secretion of viral particles. Regulates the host cell secretory pathway, which induces the intracellular retention of viral glycoproteins and favors assembly of viral particles. Creates a pore in acidic organelles and releases Ca(2+) and H(+) in the cytoplasm of infected cells, leading to a productive viral infection. High levels of cytoplasmic Ca(2+) may trigger membrane trafficking and transport of viral ER-associated proteins to viroplasms, sites of viral genome replication. This ionic imbalance induces the assembly of the inflammasome complex, which triggers the maturation of pro-IL-1beta into IL-1beta through the action of caspase-1. Targets also host mitochondria and induces mitochondrial depolarization. In addition of its role as a viroporin, acts as a lipid raft adhesion factor. Its function is as follows. Cysteine protease required for the proteolytic auto-cleavage between the non-structural proteins NS2 and NS3. The N-terminus of NS3 is required for the function of NS2 protease (active region NS2-3). Promotes the initiation of viral particle assembly by mediating the interaction between structural and non-structural proteins. Displays three enzymatic activities: serine protease with a chymotrypsin-like fold, NTPase and RNA helicase. NS3 serine protease, in association with NS4A, is responsible for the cleavages of NS3-NS4A, NS4A-NS4B, NS4B-NS5A and NS5A-NS5B. The NS3/NS4A complex prevents phosphorylation of host IRF3, thus preventing the establishment of dsRNA induced antiviral state. The NS3/NS4A complex induces host amino acid transporter component SLC3A2, thus contributing to HCV propagation. NS3 RNA helicase binds to RNA and unwinds both dsDNA and dsRNA in the 3' to 5' direction, and likely resolves RNA complicated stable secondary structures in the template strand. Binds a single ATP and catalyzes the unzipping of a single base pair of dsRNA. Inhibits host antiviral proteins TBK1 and IRF3 thereby preventing the establishment of an antiviral state. Cleaves host MAVS/CARDIF thereby preventing the establishment of an antiviral state. Cleaves host TICAM1/TRIF, thereby disrupting TLR3 signaling and preventing the establishment of an antiviral state. Functionally, induces a specific membrane alteration that serves as a scaffold for the virus replication complex. This membrane alteration gives rise to the so-called ER-derived membranous web that contains the replication complex. NS4B self-interaction contributes to its function in membranous web formation. Promotes host TRIF protein degradation in a CASP8-dependent manner thereby inhibiting host TLR3-mediated interferon signaling. Disrupts the interaction between STING and TBK1 contributing to the inhibition of interferon signaling. In terms of biological role, phosphorylated protein that is indispensable for viral replication and assembly. Both hypo- and hyperphosphorylated states are required for the viral life cycle. The hyperphosphorylated form of NS5A is an inhibitor of viral replication. Involved in RNA-binding and especially in binding to the viral genome. Zinc is essential for RNA-binding. Participates in the viral particle production as a result of its interaction with the mature viral core protein. Its interaction with host VAPB may target the viral replication complex to vesicles. Down-regulates viral IRES translation initiation. Mediates interferon resistance, presumably by interacting with and inhibiting host EIF2AK2/PKR. Prevents BIN1-induced apoptosis. Acts as a transcriptional activator of some host genes important for viral replication when localized in the nucleus. Via the interaction with host PACSIN2, modulates lipid droplet formation in order to promote virion assembly. Modulates TNFRSF21/DR6 signaling pathway for viral propagation. Its function is as follows. RNA-dependent RNA polymerase that performs primer-template recognition and RNA synthesis during viral replication. Initiates RNA transcription/replication at a flavin adenine dinucleotide (FAD), resulting in a 5'- FAD cap on viral RNAs. In this way, recognition of viral 5' RNA by host pattern recognition receptors can be bypassed, thereby evading activation of antiviral pathways. This chain is Genome polyprotein, found in Hepatitis C virus genotype 6a (isolate 6a33) (HCV).